A 210-amino-acid chain; its full sequence is Small heat shock protein hspG6 (210 aa).

Residues 34–210 (KTIIDKLPPM…YSNTIKININ (177 aa)) form the sHSP domain. The interval 93-151 (VIEKSTSSSTLDSKEDEPSIEEFEDDIKPKSKSDNTTVSTTTTATTKENKEDENKTKST) is disordered. Over residues 126-138 (DNTTVSTTTTATT) the composition is skewed to low complexity. Positions 139–151 (KENKEDENKTKST) are enriched in basic and acidic residues.

Belongs to the small heat shock protein (HSP20) family.

In Dictyostelium discoideum (Social amoeba), this protein is Small heat shock protein hspG6 (hspG6).